A 641-amino-acid chain; its full sequence is Anthrax toxin receptor-like (641 aa).

The signal sequence occupies residues 1-27 (MMSHSPSMPCSALFLLLLLLLPPTFKG). Over 28–363 (GSLRYHGPGW…ASQGIVFKRT (336 aa)) the chain is Extracellular. Residues 76–247 (DLYLVLDKSG…SALEGVVDPL (172 aa)) enclose the VWFA domain. The a divalent metal cation site is built by Ser-84, Ser-86, and Thr-150. Residues 364–384 (WLMFLPVLLVTLLLLCCTWKL) traverse the membrane as a helical segment. Over 385–641 (CIKPKKLPPP…FPPISKGPKF (257 aa)) the chain is Cytoplasmic. Positions 391-455 (LPPPPPKPEK…ARPPPAPLPA (65 aa)) are disordered. A compositionally biased stretch (pro residues) spans 407–436 (PPPSSPPAPGRGPGPGPSAGPGPGPGPSPG).

This sequence belongs to the ATR family.

The protein resides in the membrane. In Mus musculus (Mouse), this protein is Anthrax toxin receptor-like (Antxrl).